The sequence spans 238 residues: Succinate dehydrogenase iron-sulfur subunit (238 aa).

In terms of domain architecture, 2Fe-2S ferredoxin-type spans 8-97; it reads YRYNPDVDDA…KIVIRPLPGL (90 aa). [2Fe-2S] cluster is bound by residues cysteine 55, cysteine 60, and cysteine 75. One can recognise a 4Fe-4S ferredoxin-type domain in the interval 139 to 169; sequence QREKLDGLYECILCACCSTSCPSFWWNPDKF. [4Fe-4S] cluster-binding residues include cysteine 149, cysteine 152, and cysteine 155. Residue cysteine 159 coordinates [3Fe-4S] cluster. A ubiquinone is bound at residue tryptophan 164. Residues cysteine 206 and cysteine 212 each contribute to the [3Fe-4S] cluster site. Cysteine 216 is a [4Fe-4S] cluster binding site.

This sequence belongs to the succinate dehydrogenase/fumarate reductase iron-sulfur protein family. As to quaternary structure, part of an enzyme complex containing four subunits: a flavoprotein, an iron-sulfur, cytochrome b-556, and a hydrophobic anchor protein. The complex forms trimers. The cofactor is [2Fe-2S] cluster. [3Fe-4S] cluster serves as cofactor. It depends on [4Fe-4S] cluster as a cofactor.

It is found in the cell inner membrane. The catalysed reaction is a quinone + succinate = fumarate + a quinol. The protein operates within carbohydrate metabolism; tricarboxylic acid cycle; fumarate from succinate (bacterial route): step 1/1. Two distinct, membrane-bound, FAD-containing enzymes are responsible for the catalysis of fumarate and succinate interconversion; the fumarate reductase is used in anaerobic growth, and the succinate dehydrogenase is used in aerobic growth. The protein is Succinate dehydrogenase iron-sulfur subunit (sdhB) of Escherichia coli (strain K12).